The following is a 98-amino-acid chain: Integration host factor subunit beta (98 aa).

It belongs to the bacterial histone-like protein family. Heterodimer of an alpha and a beta chain.

Its function is as follows. This protein is one of the two subunits of integration host factor, a specific DNA-binding protein that functions in genetic recombination as well as in transcriptional and translational control. The sequence is that of Integration host factor subunit beta from Pseudomonas fluorescens (strain Pf0-1).